The primary structure comprises 204 residues: Cytochrome c biogenesis ATP-binding export protein CcmA (204 aa).

In terms of domain architecture, ABC transporter spans 3–204; it reads LTVTDLAIAR…PLDDPDGDFL (202 aa). Residue 35-42 coordinates ATP; that stretch reads GPNGAGKT.

Belongs to the ABC transporter superfamily. CcmA exporter (TC 3.A.1.107) family. As to quaternary structure, the complex is composed of two ATP-binding proteins (CcmA) and two transmembrane proteins (CcmB).

Its subcellular location is the cell membrane. The catalysed reaction is heme b(in) + ATP + H2O = heme b(out) + ADP + phosphate + H(+). Its function is as follows. Part of the ABC transporter complex CcmAB involved in the biogenesis of c-type cytochromes; once thought to export heme, this seems not to be the case, but its exact role is uncertain. Responsible for energy coupling to the transport system. The sequence is that of Cytochrome c biogenesis ATP-binding export protein CcmA from Ruegeria pomeroyi (strain ATCC 700808 / DSM 15171 / DSS-3) (Silicibacter pomeroyi).